The following is a 304-amino-acid chain: 4-diphosphocytidyl-2-C-methyl-D-erythritol kinase (304 aa).

Residue K18 is part of the active site. 103 to 113 (PVAAGIGGGSA) contacts ATP. D145 is an active-site residue.

This sequence belongs to the GHMP kinase family. IspE subfamily.

It catalyses the reaction 4-CDP-2-C-methyl-D-erythritol + ATP = 4-CDP-2-C-methyl-D-erythritol 2-phosphate + ADP + H(+). Its pathway is isoprenoid biosynthesis; isopentenyl diphosphate biosynthesis via DXP pathway; isopentenyl diphosphate from 1-deoxy-D-xylulose 5-phosphate: step 3/6. Its function is as follows. Catalyzes the phosphorylation of the position 2 hydroxy group of 4-diphosphocytidyl-2C-methyl-D-erythritol. The protein is 4-diphosphocytidyl-2-C-methyl-D-erythritol kinase of Rhodospirillum rubrum (strain ATCC 11170 / ATH 1.1.1 / DSM 467 / LMG 4362 / NCIMB 8255 / S1).